Consider the following 418-residue polypeptide: rRNA methyltransferase 3, mitochondrial (418 aa).

Residues 1 to 40 (MAAPAKGMWCSLGSLLRVVQTRDLNARRWVRALRRSPVRV) constitute a mitochondrion transit peptide. The segment at 41–90 (LSPSGQVEERKRAPDQQPRKAVPKASSQGQRQKQPLETSPSQTPHTWEEA) is disordered. Residues 47–58 (VEERKRAPDQQP) show a composition bias toward basic and acidic residues. Over residues 65–85 (ASSQGQRQKQPLETSPSQTPH) the composition is skewed to polar residues. 3 residues coordinate S-adenosyl-L-methionine: Gly354, Ile378, and Leu387.

It belongs to the class IV-like SAM-binding methyltransferase superfamily. RNA methyltransferase TrmH family.

Its subcellular location is the mitochondrion. It catalyses the reaction guanosine(1370) in 16S rRNA + S-adenosyl-L-methionine = 2'-O-methylguanosine(1370) in 16S rRNA + S-adenosyl-L-homocysteine + H(+). S-adenosyl-L-methionine-dependent 2'-O-ribose methyltransferase that catalyzes the formation of 2'-O-methylguanosine at position 1370 (Gm1370) in the 16S mitochondrial large subunit ribosomal RNA (mtLSU rRNA), a conserved modification in the peptidyl transferase domain of the mtLSU rRNA. Also required for formation of 2'-O-methyluridine at position 1369 (Um1369) mediated by MRM2. In Mus musculus (Mouse), this protein is rRNA methyltransferase 3, mitochondrial.